The primary structure comprises 756 residues: U3 small nucleolar RNA-associated protein 14 homolog B (756 aa).

The segment at 21–44 is disordered; the sequence is DLPENYPLSTSEDEGDSDGEGKRQ. A phosphoserine mark is found at serine 29, serine 31, and serine 37. Coiled coils occupy residues 215-244 and 316-345; these read SLEE…RREK and PEAR…SEEE. Composition is skewed to basic and acidic residues over residues 419–428 and 452–468; these read KERSFQERVD and LNKE…SSEE. Disordered stretches follow at residues 419 to 468 and 497 to 539; these read KERS…SSEE and QQGE…KKKK. The stretch at 449 to 476 forms a coiled coil; it reads LQKLNKESHQSDNQKVSSEENVLHIQRE. Serine 554 carries the post-translational modification Phosphoserine.

This sequence belongs to the UTP14 family. As to expression, expressed predominantly in germ cells of the testis; weakly expressed in brain.

It is found in the nucleus. The protein resides in the nucleolus. In terms of biological role, essential for spermatogenesis. May be required specifically for ribosome biogenesis and hence protein synthesis during male meiosis. The protein is U3 small nucleolar RNA-associated protein 14 homolog B (Utp14b) of Mus musculus (Mouse).